The primary structure comprises 443 residues: Zinc finger protein ZIC 1 (443 aa).

Residues 221–256 (LICKWIEPEQLANPKKSCNKTFSTMHELVTHVTVEH) form a C2H2-type 1; atypical zinc finger. Residues 265–292 (HICVWEECPREGKPFKAKYKLINHIRVH) form a C2H2-type 2; atypical zinc finger. C2H2-type zinc fingers lie at residues 298–322 (FPCPFPGCGKVFARSENLKIHKRTH), 328–352 (FKCEFEGCDRRFANSSDRKKHMHVH), and 358–380 (YLCKMCDKSYTHPSSLRKHMKVH). Residues 371 to 433 (SSLRKHMKVH…AVHHTSNHST (63 aa)) are disordered. Over residues 383 to 396 (SSQGSQPSPAASSG) the composition is skewed to low complexity. The span at 397 to 413 (YESSTPPTIVSPSAENQ) shows a compositional bias: polar residues. The negatively regulates transcriptional activity stretch occupies residues 408–443 (PSAENQSTSSLSPSSSAVHHTSNHSTLSSNFNEWYV). Positions 414 to 433 (STSSLSPSSSAVHHTSNHST) are enriched in low complexity.

This sequence belongs to the GLI C2H2-type zinc-finger protein family. In terms of tissue distribution, during early gastrula stages, widely expressed in the dorsal ectoderm. At mid-gastrula, expressed throughout the presumptive neural plate and at late gastrula, expression gradually diminishes in the dorsal midline and increases in the anterior folds. By early neurula stage, expression becomes restricted to the lateral edges of the neural plate, corresponding to the presumptive dorsal neural plate and neural crest, and in flanking ectoderm. In early tailbud stages (stages 22-23), expressed in the dorsal forebrain, midbrain and hindbrain. Subsequently expressed in the telencephalon and at the diencephalon/mesencephalon boundary. In the spinal cord, expression is restricted to the dorsal most region including the roof plate. Also expressed in the somites but not in eye vesicles. At larval stages, expressed mainly in the dorsal neural tube throughout its anteroposterior axis.

The protein resides in the nucleus. It is found in the cytoplasm. In terms of biological role, transcriptional activator that induces expression of multiple genes including pax3, en2, snai2/slug, feb and a subset of wnt genes. Has multiple key roles in the regulation of neural induction and neurogenesis: acts as a neural competence factor, sensitizing the presumptive neuroectoderm to respond to subsequent neuralizing signals. Promotes both preplacodal cell fates and neural crest cell fates, two of the cell populations that arise from the neural plate border. Cooperates with pax3 in concert with wnt signaling to determine neural crest fate. Synergizes with the bmp-inhibitor noggin/nog and acts through the wnt pathway to induce expression of en2. May bind to the minimal GLI-consensus sequence 5'-TGGGTGGTC-3'. The sequence is that of Zinc finger protein ZIC 1 (zic1) from Xenopus laevis (African clawed frog).